The following is a 70-amino-acid chain: MGSFSIWHWLIVLVVVALLFGGRGRLSGIMGDAAKGIRAFRDGLKGESEQAEDETAKPLPKERDKDSARG.

A helical transmembrane segment spans residues 1 to 21; the sequence is MGSFSIWHWLIVLVVVALLFG. The disordered stretch occupies residues 45–70; sequence KGESEQAEDETAKPLPKERDKDSARG.

It belongs to the TatA/E family. As to quaternary structure, the Tat system comprises two distinct complexes: a TatABC complex, containing multiple copies of TatA, TatB and TatC subunits, and a separate TatA complex, containing only TatA subunits. Substrates initially bind to the TatABC complex, which probably triggers association of the separate TatA complex to form the active translocon.

The protein resides in the cell inner membrane. Part of the twin-arginine translocation (Tat) system that transports large folded proteins containing a characteristic twin-arginine motif in their signal peptide across membranes. TatA could form the protein-conducting channel of the Tat system. The protein is Sec-independent protein translocase protein TatA of Phenylobacterium zucineum (strain HLK1).